We begin with the raw amino-acid sequence, 425 residues long: Monoacylglycerol lipase ABHD2 (425 aa).

The Cytoplasmic portion of the chain corresponds to 1–9; that stretch reads MNAMLETPE. Residues 10-30 traverse the membrane as a helical; Signal-anchor for type II membrane protein segment; it reads LPAVFDGVKLAAVAAVLYVIV. Over 31–425 the chain is Extracellular; that stretch reads RCLNLKSPTA…DTEQMEAELE (395 aa). In terms of domain architecture, AB hydrolase-1 spans 128–382; the sequence is MVICPGIANH…HGGHLGFFEG (255 aa). Asn-136 carries N-linked (GlcNAc...) asparagine glycosylation. Residue Ser-207 is the Nucleophile of the active site. Catalysis depends on charge relay system residues Asp-345 and His-376. N-linked (GlcNAc...) asparagine glycosylation occurs at Asn-410.

The protein belongs to the AB hydrolase superfamily. AB hydrolase 4 family. Widely expressed with higher expression in testis. Expressed by vascular smooth muscle cells, non vascular smooth muscle cells and heart.

It is found in the cell membrane. It localises to the cytoplasmic vesicle. The protein resides in the secretory vesicle. Its subcellular location is the acrosome membrane. It carries out the reaction Hydrolyzes glycerol monoesters of long-chain fatty acids.. The catalysed reaction is an acetyl ester + H2O = an aliphatic alcohol + acetate + H(+). The enzyme catalyses a triacylglycerol + H2O = a diacylglycerol + a fatty acid + H(+). It catalyses the reaction 2-(5Z,8Z,11Z,14Z-eicosatetraenoyl)-glycerol + H2O = glycerol + (5Z,8Z,11Z,14Z)-eicosatetraenoate + H(+). It carries out the reaction a butanoate ester + H2O = an aliphatic alcohol + butanoate + H(+). The catalysed reaction is hexadecanoate ester + H2O = an aliphatic alcohol + hexadecanoate + H(+). Acylglycerol lipase activity is activated upon binding to progesterone. Functionally, progesterone-dependent acylglycerol lipase that catalyzes hydrolysis of endocannabinoid arachidonoylglycerol (AG) from cell membrane. Acts as a progesterone receptor: progesterone-binding activates the acylglycerol lipase activity, mediating degradation of 1-arachidonoylglycerol (1AG) and 2-arachidonoylglycerol (2AG) to glycerol and arachidonic acid (AA). Also displays an ester hydrolase activity against acetyl ester, butanoate ester and hexadecanoate ester. Plays a key role in sperm capacitation in response to progesterone by mediating degradation of 2AG, an inhibitor of the sperm calcium channel CatSper, leading to calcium influx via CatSper and sperm activation. Involved in acrosomal reaction. May also play a role in smooth muscle cells migration. The polypeptide is Monoacylglycerol lipase ABHD2 (Abhd2) (Mus musculus (Mouse)).